Reading from the N-terminus, the 824-residue chain is Disintegrin and metalloproteinase domain-containing protein 8 (824 aa).

A signal peptide spans 1–16; sequence MRGLGLWLLGAMMLPA. At 17–655 the chain is on the extracellular side; it reads IAPSRPWALM…EVHAASGSLP (639 aa). Residues Asn67 and Asn91 are each glycosylated (N-linked (GlcNAc...) asparagine). The Peptidase M12B domain maps to 200–400; that stretch reads RYVELYVVVD…PQSVCLANAP (201 aa). Intrachain disulfides connect Cys310/Cys395, Cys351/Cys379, Cys353/Cys362, Cys435/Cys457, Cys448/Cys454, Cys466/Cys486, Cys473/Cys503, Cys498/Cys508, Cys566/Cys613, Cys613/Cys623, Cys617/Cys629, and Cys631/Cys640. Residue His334 participates in Zn(2+) binding. Residue Glu335 is part of the active site. Zn(2+) is bound by residues His338 and His344. Positions 408–494 constitute a Disintegrin domain; the sequence is GPVCGNLFVE…ECPEDAFQEN (87 aa). Asn436 carries an N-linked (GlcNAc...) asparagine glycan. The 33-residue stretch at 609–641 folds into the EGF-like domain; sequence RSSNCSAQCHNHGVCNHKQECHCHAGWAPPHCA. N-linked (GlcNAc...) asparagine glycosylation is present at Asn612. The chain crosses the membrane as a helical span at residues 656–676; that stretch reads VFVVVVLVLLAVVLVTLAGII. The Cytoplasmic portion of the chain corresponds to 677-824; sequence VYRKARSRIL…KQGAGAPTAP (148 aa). Disordered stretches follow at residues 710–756 and 776–824; these read VPAK…PVTV and KPTF…PTAP. The segment covering 747–756 has biased composition (pro residues); it reads RPPPAPPVTV. Low complexity predominate over residues 788–804; sequence PGAGAANPGPAEGAVGP.

In terms of assembly, interacts with FST3. Requires Zn(2+) as cofactor. As to expression, expressed on neutrophils and monocytes.

Its subcellular location is the membrane. In terms of biological role, possible involvement in extravasation of leukocytes. The protein is Disintegrin and metalloproteinase domain-containing protein 8 (ADAM8) of Homo sapiens (Human).